A 421-amino-acid polypeptide reads, in one-letter code: Ankyrin repeat and SOCS box protein 6 (421 aa).

6 ANK repeats span residues glutamate 67–phenylalanine 97, threonine 102–arginine 131, histidine 136–alanine 166, histidine 170–alanine 205, glycine 226–glutamate 255, and glutamate 260–cysteine 289. The SOCS box domain maps to alanine 360–glycine 415.

This sequence belongs to the ankyrin SOCS box (ASB) family. As to quaternary structure, binds APS. Identified in a complex with ELOB and ELOC. Interacts with CUL5 and RNF7. Interacts with SQSTM1. Ubiquitinated by RNF41; leading to proteasomal degradation.

It localises to the cytoplasm. It participates in protein modification; protein ubiquitination. Its function is as follows. Probable substrate-recognition component of a SCF-like ECS (Elongin-Cullin-SOCS-box protein) E3 ubiquitin-protein ligase complex which mediates the ubiquitination and subsequent proteasomal degradation of target proteins. May play a role in the regulation of cell proliferation and autophagy by promoting the ubiquitination and degradation of SQSTM1. This Homo sapiens (Human) protein is Ankyrin repeat and SOCS box protein 6 (ASB6).